The chain runs to 101 residues: Small ribosomal subunit protein eS24 (101 aa).

This sequence belongs to the eukaryotic ribosomal protein eS24 family.

This is Small ribosomal subunit protein eS24 from Methanosarcina mazei (strain ATCC BAA-159 / DSM 3647 / Goe1 / Go1 / JCM 11833 / OCM 88) (Methanosarcina frisia).